The following is a 607-amino-acid chain: Actin-related protein 5 (607 aa).

Lys283 participates in a covalent cross-link: Glycyl lysine isopeptide (Lys-Gly) (interchain with G-Cter in SUMO2). 2 coiled-coil regions span residues 288–327 and 355–384; these read TLTS…LDRL and EELQ…NLEV. Over residues 584 to 596 the composition is skewed to low complexity; it reads SRSSDAQASSKGS. A disordered region spans residues 584-607; that stretch reads SRSSDAQASSKGSAAGGGGAGEQA. Residues 597-607 show a composition bias toward gly residues; the sequence is AAGGGGAGEQA.

It belongs to the actin family. ARP5 subfamily. Component of the chromatin remodeling INO80 complex; specifically part of a complex module associated with the helicase ATP-binding and the helicase C-terminal domain of INO80. Interacts with DDB1. Interacts with ACTR8; the interaction is observed in asynchronous (interphase) cells but not in metaphase-arrested cells indicative for a possible dissociation of the INO80 complex in mitotic cells.

The protein localises to the nucleus. It localises to the cytoplasm. Functionally, proposed core component of the chromatin remodeling INO80 complex which is involved in transcriptional regulation, DNA replication and probably DNA repair. Involved in DNA double-strand break repair and UV-damage excision repair. The sequence is that of Actin-related protein 5 (ACTR5) from Homo sapiens (Human).